A 421-amino-acid chain; its full sequence is U-box domain-containing protein 25 (421 aa).

In terms of domain architecture, U-box spans 13–88 (QIPYHFRCPI…QEWCVANRSN (76 aa)).

It catalyses the reaction S-ubiquitinyl-[E2 ubiquitin-conjugating enzyme]-L-cysteine + [acceptor protein]-L-lysine = [E2 ubiquitin-conjugating enzyme]-L-cysteine + N(6)-ubiquitinyl-[acceptor protein]-L-lysine.. It functions in the pathway protein modification; protein ubiquitination. In terms of biological role, functions as an E3 ubiquitin ligase. The protein is U-box domain-containing protein 25 (PUB25) of Arabidopsis thaliana (Mouse-ear cress).